Reading from the N-terminus, the 701-residue chain is Elongation factor G (701 aa).

The 284-residue stretch at 8 to 291 (SRYRNIGIVA…AVIDYLPAPV (284 aa)) folds into the tr-type G domain. Residues 17–24 (AHVDAGKT), 89–93 (DTPGH), and 143–146 (NKMD) each bind GTP.

The protein belongs to the TRAFAC class translation factor GTPase superfamily. Classic translation factor GTPase family. EF-G/EF-2 subfamily.

The protein resides in the cytoplasm. Its function is as follows. Catalyzes the GTP-dependent ribosomal translocation step during translation elongation. During this step, the ribosome changes from the pre-translocational (PRE) to the post-translocational (POST) state as the newly formed A-site-bound peptidyl-tRNA and P-site-bound deacylated tRNA move to the P and E sites, respectively. Catalyzes the coordinated movement of the two tRNA molecules, the mRNA and conformational changes in the ribosome. This chain is Elongation factor G, found in Pseudomonas fluorescens (strain SBW25).